Consider the following 184-residue polypeptide: Probable RNA 2'-phosphotransferase (184 aa).

This sequence belongs to the KptA/TPT1 family.

Removes the 2'-phosphate from RNA via an intermediate in which the phosphate is ADP-ribosylated by NAD followed by a presumed transesterification to release the RNA and generate ADP-ribose 1''-2''-cyclic phosphate (APPR&gt;P). May function as an ADP-ribosylase. The polypeptide is Probable RNA 2'-phosphotransferase (Rhizobium johnstonii (strain DSM 114642 / LMG 32736 / 3841) (Rhizobium leguminosarum bv. viciae)).